We begin with the raw amino-acid sequence, 84 residues long: Small ribosomal subunit protein bS18 (84 aa).

It belongs to the bacterial ribosomal protein bS18 family. As to quaternary structure, part of the 30S ribosomal subunit. Forms a tight heterodimer with protein bS6.

Functionally, binds as a heterodimer with protein bS6 to the central domain of the 16S rRNA, where it helps stabilize the platform of the 30S subunit. This chain is Small ribosomal subunit protein bS18, found in Polynucleobacter necessarius subsp. necessarius (strain STIR1).